Consider the following 83-residue polypeptide: Small ribosomal subunit protein bS18A (83 aa).

It belongs to the bacterial ribosomal protein bS18 family. In terms of assembly, part of the 30S ribosomal subunit. Forms a tight heterodimer with protein bS6.

Functionally, binds as a heterodimer with protein bS6 to the central domain of the 16S rRNA, where it helps stabilize the platform of the 30S subunit. The chain is Small ribosomal subunit protein bS18A from Nocardia farcinica (strain IFM 10152).